Consider the following 201-residue polypeptide: Glycerol-3-phosphate acyltransferase (201 aa).

5 helical membrane passes run 9 to 29 (LTLI…FGLI), 60 to 80 (LAAA…LVAS), 86 to 106 (AAIG…WIGF), 116 to 136 (LGVL…VWIV), and 153 to 173 (IVVP…LFAI).

It belongs to the PlsY family. Probably interacts with PlsX.

The protein resides in the cell inner membrane. It catalyses the reaction an acyl phosphate + sn-glycerol 3-phosphate = a 1-acyl-sn-glycero-3-phosphate + phosphate. It functions in the pathway lipid metabolism; phospholipid metabolism. Functionally, catalyzes the transfer of an acyl group from acyl-phosphate (acyl-PO(4)) to glycerol-3-phosphate (G3P) to form lysophosphatidic acid (LPA). This enzyme utilizes acyl-phosphate as fatty acyl donor, but not acyl-CoA or acyl-ACP. This Brucella anthropi (strain ATCC 49188 / DSM 6882 / CCUG 24695 / JCM 21032 / LMG 3331 / NBRC 15819 / NCTC 12168 / Alc 37) (Ochrobactrum anthropi) protein is Glycerol-3-phosphate acyltransferase.